A 147-amino-acid polypeptide reads, in one-letter code: UPF0306 protein YhbP (147 aa).

Belongs to the UPF0306 family.

The sequence is that of UPF0306 protein YhbP from Escherichia coli O157:H7.